The sequence spans 528 residues: Na(+)/H(+) antiporter NhaB (528 aa).

11 consecutive transmembrane segments (helical) span residues 10–30 (IGNF…SFLI), 63–83 (YPLQ…MTSA), 96–116 (VLLL…LLLF), 131–165 (VSLM…FYAI), 204–224 (LLMH…VGEP), 240–260 (FVVR…LTCL), 305–325 (VLVG…VGLV), 359–379 (LAVF…APVI), 391–411 (LVIF…VFVG), 449–469 (ATPN…APLI), and 476–496 (MVWM…LAIE).

The protein belongs to the NhaB Na(+)/H(+) (TC 2.A.34) antiporter family.

The protein resides in the cell inner membrane. The enzyme catalyses 2 Na(+)(in) + 3 H(+)(out) = 2 Na(+)(out) + 3 H(+)(in). In terms of biological role, na(+)/H(+) antiporter that extrudes sodium in exchange for external protons. The chain is Na(+)/H(+) antiporter NhaB from Shewanella sp. (strain W3-18-1).